Consider the following 178-residue polypeptide: Large ribosomal subunit protein uL6 (178 aa).

This sequence belongs to the universal ribosomal protein uL6 family. Part of the 50S ribosomal subunit.

Functionally, this protein binds to the 23S rRNA, and is important in its secondary structure. It is located near the subunit interface in the base of the L7/L12 stalk, and near the tRNA binding site of the peptidyltransferase center. The protein is Large ribosomal subunit protein uL6 of Frankia casuarinae (strain DSM 45818 / CECT 9043 / HFP020203 / CcI3).